Here is a 359-residue protein sequence, read N- to C-terminus: DNA replication and repair protein RecF (359 aa).

30–37 (GPNAKGKT) lines the ATP pocket.

Belongs to the RecF family.

It localises to the cytoplasm. In terms of biological role, the RecF protein is involved in DNA metabolism; it is required for DNA replication and normal SOS inducibility. RecF binds preferentially to single-stranded, linear DNA. It also seems to bind ATP. This Protochlamydia amoebophila (strain UWE25) protein is DNA replication and repair protein RecF.